The following is a 136-amino-acid chain: Keratin-associated protein 4-2 (136 aa).

Tandem repeats lie at residues 5-9 (CCGSV), 20-24 (CCRPS), 25-29 (CCQTT), 30-34 (CCRTT), 35-39 (CCRPS), 40-44 (CCVSS), 45-49 (CCRPQ), 50-54 (CCQSV), 55-59 (CCQPT), 60-64 (CCSPS), 65-69 (CCQTT), 70-74 (CCRTT), 75-79 (CCRPS), 80-84 (CCVSS), 90-94 (CCQSV), 95-99 (YCQPT), 100-104 (CCRPS), 110-114 (CCRTT), 120-124 (CCVST), and 125-129 (CCRPT). The segment at 5-129 (CCGSVCSDQG…CCVSTCCRPT (125 aa)) is 20 X 5 AA repeats OF C-C-[GRQVS]-[SPT]-[VSTQ].

The protein belongs to the KRTAP type 4 family. In terms of assembly, interacts with hair keratins.

Its function is as follows. In the hair cortex, hair keratin intermediate filaments are embedded in an interfilamentous matrix, consisting of hair keratin-associated proteins (KRTAP), which are essential for the formation of a rigid and resistant hair shaft through their extensive disulfide bond cross-linking with abundant cysteine residues of hair keratins. The matrix proteins include the high-sulfur and high-glycine-tyrosine keratins. The polypeptide is Keratin-associated protein 4-2 (KRTAP4-2) (Homo sapiens (Human)).